Reading from the N-terminus, the 244-residue chain is tRNA pseudouridine synthase A (244 aa).

Catalysis depends on Asp-52, which acts as the Nucleophile. Tyr-110 contributes to the substrate binding site.

The protein belongs to the tRNA pseudouridine synthase TruA family. As to quaternary structure, homodimer.

It carries out the reaction uridine(38/39/40) in tRNA = pseudouridine(38/39/40) in tRNA. In terms of biological role, formation of pseudouridine at positions 38, 39 and 40 in the anticodon stem and loop of transfer RNAs. The chain is tRNA pseudouridine synthase A from Clostridium botulinum (strain Eklund 17B / Type B).